The primary structure comprises 581 residues: UvrABC system protein C (581 aa).

The 80-residue stretch at R15–V94 folds into the GIY-YIG domain. One can recognise a UVR domain in the interval G202 to L237.

Belongs to the UvrC family. As to quaternary structure, interacts with UvrB in an incision complex.

It localises to the cytoplasm. Its function is as follows. The UvrABC repair system catalyzes the recognition and processing of DNA lesions. UvrC both incises the 5' and 3' sides of the lesion. The N-terminal half is responsible for the 3' incision and the C-terminal half is responsible for the 5' incision. The sequence is that of UvrABC system protein C from Haloarcula marismortui (strain ATCC 43049 / DSM 3752 / JCM 8966 / VKM B-1809) (Halobacterium marismortui).